Reading from the N-terminus, the 212-residue chain is Uridine kinase (212 aa).

Residue 13-20 (GASASGKS) coordinates ATP.

It belongs to the uridine kinase family.

Its subcellular location is the cytoplasm. It carries out the reaction uridine + ATP = UMP + ADP + H(+). It catalyses the reaction cytidine + ATP = CMP + ADP + H(+). Its pathway is pyrimidine metabolism; CTP biosynthesis via salvage pathway; CTP from cytidine: step 1/3. The protein operates within pyrimidine metabolism; UMP biosynthesis via salvage pathway; UMP from uridine: step 1/1. This is Uridine kinase from Shewanella baltica (strain OS223).